Consider the following 185-residue polypeptide: ATP synthase subunit b, chloroplastic (185 aa).

The helical transmembrane segment at 31–53 (IINITVVLGILIYFGKGVLSNLL) threads the bilayer.

Belongs to the ATPase B chain family. As to quaternary structure, F-type ATPases have 2 components, F(1) - the catalytic core - and F(0) - the membrane proton channel. F(1) has five subunits: alpha(3), beta(3), gamma(1), delta(1), epsilon(1). F(0) has four main subunits: a(1), b(1), b'(1) and c(10-14). The alpha and beta chains form an alternating ring which encloses part of the gamma chain. F(1) is attached to F(0) by a central stalk formed by the gamma and epsilon chains, while a peripheral stalk is formed by the delta, b and b' chains.

It is found in the plastid. Its subcellular location is the chloroplast thylakoid membrane. Functionally, f(1)F(0) ATP synthase produces ATP from ADP in the presence of a proton or sodium gradient. F-type ATPases consist of two structural domains, F(1) containing the extramembraneous catalytic core and F(0) containing the membrane proton channel, linked together by a central stalk and a peripheral stalk. During catalysis, ATP synthesis in the catalytic domain of F(1) is coupled via a rotary mechanism of the central stalk subunits to proton translocation. Its function is as follows. Component of the F(0) channel, it forms part of the peripheral stalk, linking F(1) to F(0). This is ATP synthase subunit b, chloroplastic from Gnetum parvifolium (Small-leaved jointfir).